The following is a 5100-amino-acid chain: Hemicentin-2 (5100 aa).

The N-terminal stretch at 1 to 19 is a signal peptide; it reads MTPGAQLLPLLVAISTAVA. In terms of domain architecture, VWFA spans 37 to 211; it reads DATLAFVFDV…QVSEVLKWVE (175 aa). N-linked (GlcNAc...) asparagine glycosylation is found at Asn-330, Asn-347, Asn-380, Asn-479, Asn-526, Asn-548, and Asn-675. Ig-like C2-type domains lie at 426–515, 517–601, 609–692, 699–782, 787–877, 882–968, 973–1058, 1063–1156, 1161–1239, 1246–1335, 1340–1437, 1442–1531, 1536–1624, 1629–1717, 1722–1810, 1825–1913, 1920–2008, 2011–2100, 2105–2189, 2196–2285, 2290–2379, 2384–2473, 2478–2566, 2571–2662, 2667–2758, 2781–2871, 2875–2964, 2971–3058, 3063–3153, 3157–3245, 3250–3340, 3345–3432, 3438–3523, 3528–3609, 3614–3702, 3707–3793, 3798–3886, 3891–3977, 3982–4067, 4071–4158, 4163–4244, 4252–4336, and 4343–4428; these read PGVP…IVIT, PPPQ…RATT, PQVS…ETVT, PSVS…IQLV, PRLT…LVVT, PQIA…VELV, PRIH…MWLS, PMIK…YVLR, PQVQ…WKLE, PHWG…AKLV, PSIR…FNLA, PSLL…FQLS, PTIW…TSLE, PTIE…YSVE, PQLL…VEVS, SAHH…KDVT, PNIE…LRVN, PRIT…VILQ, PSIL…KHFN, PAFP…QSLE, PQVT…FALS, PHLT…FSVE, PSIE…TQLS, PTIL…YHVE, PSIS…QDFN, PHEE…YELL, PPVI…KLFT, PQIS…VQLN, PSFK…FVLA, PPTF…FVVS, PQIQ…HTVN, PTIK…RNFT, PPIL…FQLT, PHIE…FRVR, PNVV…FRVE, PTIQ…LDLR, PAIA…YQVT, PTIA…MVLT, PVVK…TRLV, PPVI…VHLT, PVLT…QAVS, PVLQ…KVVT, and PVFQ…ALLA. An intrachain disulfide couples Cys-449 to Cys-497. Disulfide bonds link Cys-539–Cys-588, Cys-630–Cys-678, Cys-720–Cys-766, Cys-808–Cys-859, Cys-903–Cys-952, and Cys-994–Cys-1042. Arg-909, Arg-914, and Arg-915 each carry omega-N-methylarginine. N-linked (GlcNAc...) asparagine glycans are attached at residues Asn-1024 and Asn-1068. 2 disulfide bridges follow: Cys-1091-Cys-1140 and Cys-1182-Cys-1225. A glycan (N-linked (GlcNAc...) asparagine) is linked at Asn-1264. The disordered stretch occupies residues 1265–1293; sequence ASLPCPAQGTPKPRITWRRGPSSEPLNGR. Cys-1269 and Cys-1319 are oxidised to a cystine. N-linked (GlcNAc...) asparagine glycosylation occurs at Asn-1350. Intrachain disulfides connect Cys-1363–Cys-1421 and Cys-1465–Cys-1515. Residue Asn-1542 is glycosylated (N-linked (GlcNAc...) asparagine). Intrachain disulfides connect Cys-1559/Cys-1608, Cys-1653/Cys-1701, Cys-1745/Cys-1794, and Cys-1846/Cys-1899. N-linked (GlcNAc...) asparagine glycans are attached at residues Asn-1676 and Asn-1787. Asn-1934 carries N-linked (GlcNAc...) asparagine glycosylation. 2 cysteine pairs are disulfide-bonded: Cys-1941–Cys-1990 and Cys-2033–Cys-2084. N-linked (GlcNAc...) asparagine glycans are attached at residues Asn-2034, Asn-2113, and Asn-2119. Disulfide bonds link Cys-2126-Cys-2175 and Cys-2218-Cys-2269. N-linked (GlcNAc...) asparagine glycans are attached at residues Asn-2309, Asn-2315, Asn-2345, and Asn-2395. Cys-2314 and Cys-2363 are oxidised to a cystine. Cys-2408 and Cys-2457 are disulfide-bonded. Residues Asn-2469, Asn-2502, Asn-2541, Asn-2606, and Asn-2688 are each glycosylated (N-linked (GlcNAc...) asparagine). Intrachain disulfides connect Cys-2501/Cys-2550 and Cys-2597/Cys-2646. 2 disulfide bridges follow: Cys-2695–Cys-2744 and Cys-2806–Cys-2855. Asn-2892 is a glycosylation site (N-linked (GlcNAc...) asparagine). A disulfide bond links Cys-2901 and Cys-2950. Asn-2986 carries N-linked (GlcNAc...) asparagine glycosylation. 5 disulfides stabilise this stretch: Cys-2993/Cys-3042, Cys-3088/Cys-3137, Cys-3180/Cys-3229, Cys-3273/Cys-3324, and Cys-3369/Cys-3418. A glycan (N-linked (GlcNAc...) asparagine) is linked at Asn-3430. 3 disulfide bridges follow: Cys-3462-Cys-3507, Cys-3551-Cys-3593, and Cys-3637-Cys-3686. N-linked (GlcNAc...) asparagine glycosylation is found at Asn-3560 and Asn-3575. N-linked (GlcNAc...) asparagine glycans are attached at residues Asn-3717 and Asn-3721. A disulfide bond links Cys-3728 and Cys-3777. The N-linked (GlcNAc...) asparagine glycan is linked to Asn-3806. 7 cysteine pairs are disulfide-bonded: Cys-3819–Cys-3870, Cys-3912–Cys-3961, Cys-4003–Cys-4051, Cys-4093–Cys-4142, Cys-4184–Cys-4231, Cys-4274–Cys-4322, and Cys-4364–Cys-4412. A glycan (N-linked (GlcNAc...) asparagine) is linked at Asn-4304. In terms of domain architecture, Nidogen G2 beta-barrel spans 4432 to 4654; the sequence is EPRGSRGSMT…QTEENEVGCP (223 aa). N-linked (GlcNAc...) asparagine glycosylation is found at Asn-4455 and Asn-4601. The EGF-like 1; calcium-binding domain occupies 4668–4708; it reads DKDECSGGPSPCSHTCRNAPGHFSCSCPTGFSLAWDHRNCR. Disulfide bonds link Cys-4672–Cys-4683, Cys-4679–Cys-4692, Cys-4694–Cys-4707, Cys-4713–Cys-4726, Cys-4720–Cys-4735, Cys-4739–Cys-4752, Cys-4758–Cys-4771, Cys-4765–Cys-4780, Cys-4801–Cys-4812, Cys-4808–Cys-4821, and Cys-4823–Cys-4836. One can recognise an EGF-like 2; calcium-binding domain in the interval 4709–4753; it reads DVDECAGNTHLCQEEQRCVNLLGSYNCLASCRPGFRVTADGSNCE. One can recognise an EGF-like 3; calcium-binding domain in the interval 4754 to 4789; that stretch reads DVDECLEQLDECHYNQLCENTPGGHHCGCPRGYRQQ. In terms of domain architecture, EGF-like 4; calcium-binding spans 4797 to 4837; sequence DINECLQLPTPCVYQCQNLQGSYRCLCPPGQTLLRDGRTCI. N-linked (GlcNAc...) asparagine glycosylation occurs at Asn-4845. The EGF-like 5; calcium-binding domain occupies 4904-4943; sequence DLDECRVRSLCQHACQNTEGSYYCLCPSGYRLLPSGKNCQ. Cystine bridges form between Cys-4908–Cys-4918, Cys-4914–Cys-4927, and Cys-4929–Cys-4942. Asn-5035 carries an N-linked (GlcNAc...) asparagine glycan.

Reported to be phosphorylated; however as this position is extracellular, the in vivo relevance is unsure. As to expression, in neonatal skin, localized in the pericellular space of basal epidermal keratinocytes (at protein level). In adult skin, restricted to basal keratinocytes of hair follicles and the interfollicular epidermis. Absent from the myotendinous junction but present in skeletal muscle (at protein level). Expressed in the pericellular extracellular matrix of epithelial cells in a number of tissues including embryonic trophectoderm and adult skin and tongue. Also present in the extracellular matrix of some, but not all, blood vessels. Expressed primarily in epithelial cells in the embryonic epidermis, lung, intestine, skeletal hindlimb muscle, tongue and the muscular layers of the esophagus.

It is found in the secreted. The protein localises to the extracellular space. The protein resides in the extracellular matrix. Its subcellular location is the cleavage furrow. This Mus musculus (Mouse) protein is Hemicentin-2 (Hmcn2).